A 218-amino-acid polypeptide reads, in one-letter code: Monomethylamine corrinoid protein 1 (218 aa).

Residues 1-91 form the B12-binding N-terminal domain; the sequence is MANQEIFDKL…ELEKTKVEGE (91 aa). The B12-binding domain maps to 94-218; it reads TGLAITFVAE…AAKVALNIMK (125 aa). Histidine 107 contacts methylcob(III)alamin.

It belongs to the methylamine corrinoid protein family. In terms of assembly, can form a complex with MtmB.

The protein operates within one-carbon metabolism; methanogenesis from methylamine. Functionally, acts as a methyl group carrier between MtmB and MtbA. The sequence is that of Monomethylamine corrinoid protein 1 (mtmC1) from Methanosarcina acetivorans (strain ATCC 35395 / DSM 2834 / JCM 12185 / C2A).